Reading from the N-terminus, the 81-residue chain is MAQQRRGGFKRRKKVDFIAANKIEVVDYKDTELLKRFISERGKILPRRVTGTSAKNQRKVVNAIKRARVMALLPFVAEDQN.

The protein belongs to the bacterial ribosomal protein bS18 family. In terms of assembly, part of the 30S ribosomal subunit. Forms a tight heterodimer with protein bS6.

Its function is as follows. Binds as a heterodimer with protein bS6 to the central domain of the 16S rRNA, where it helps stabilize the platform of the 30S subunit. The protein is Small ribosomal subunit protein bS18 of Lactococcus lactis subsp. cremoris (strain MG1363).